Consider the following 205-residue polypeptide: Holliday junction branch migration complex subunit RuvA (205 aa).

The segment at 1-65 (MIGRLRGAVA…SAGLRLYGFL (65 aa)) is domain I. Residues 66 to 144 (TREDRRAFVL…TDGPVLMSAP (79 aa)) are domain II. Positions 145-153 (TSSAPSAPA) are flexible linker. Residues 153–205 (AKPAPTGDAVAALMGLGVAEVNARRVVEAAAAELGEEATVQALIKAGLKELGR) are domain III.

It belongs to the RuvA family. As to quaternary structure, homotetramer. Forms an RuvA(8)-RuvB(12)-Holliday junction (HJ) complex. HJ DNA is sandwiched between 2 RuvA tetramers; dsDNA enters through RuvA and exits via RuvB. An RuvB hexamer assembles on each DNA strand where it exits the tetramer. Each RuvB hexamer is contacted by two RuvA subunits (via domain III) on 2 adjacent RuvB subunits; this complex drives branch migration. In the full resolvosome a probable DNA-RuvA(4)-RuvB(12)-RuvC(2) complex forms which resolves the HJ.

The protein resides in the cytoplasm. Its function is as follows. The RuvA-RuvB-RuvC complex processes Holliday junction (HJ) DNA during genetic recombination and DNA repair, while the RuvA-RuvB complex plays an important role in the rescue of blocked DNA replication forks via replication fork reversal (RFR). RuvA specifically binds to HJ cruciform DNA, conferring on it an open structure. The RuvB hexamer acts as an ATP-dependent pump, pulling dsDNA into and through the RuvAB complex. HJ branch migration allows RuvC to scan DNA until it finds its consensus sequence, where it cleaves and resolves the cruciform DNA. The polypeptide is Holliday junction branch migration complex subunit RuvA (Caulobacter vibrioides (strain ATCC 19089 / CIP 103742 / CB 15) (Caulobacter crescentus)).